Here is a 403-residue protein sequence, read N- to C-terminus: Probable tRNA sulfurtransferase (403 aa).

A THUMP domain is found at 60-165; that stretch reads QLAEERLKPI…KEGVFLSCRT (106 aa). Residues 183–184, 208–209, arginine 265, glycine 287, and glutamine 296 each bind ATP; these read ML and HF.

This sequence belongs to the ThiI family.

The protein localises to the cytoplasm. The catalysed reaction is [ThiI sulfur-carrier protein]-S-sulfanyl-L-cysteine + a uridine in tRNA + 2 reduced [2Fe-2S]-[ferredoxin] + ATP + H(+) = [ThiI sulfur-carrier protein]-L-cysteine + a 4-thiouridine in tRNA + 2 oxidized [2Fe-2S]-[ferredoxin] + AMP + diphosphate. It carries out the reaction [ThiS sulfur-carrier protein]-C-terminal Gly-Gly-AMP + S-sulfanyl-L-cysteinyl-[cysteine desulfurase] + AH2 = [ThiS sulfur-carrier protein]-C-terminal-Gly-aminoethanethioate + L-cysteinyl-[cysteine desulfurase] + A + AMP + 2 H(+). Its pathway is cofactor biosynthesis; thiamine diphosphate biosynthesis. Functionally, catalyzes the ATP-dependent transfer of a sulfur to tRNA to produce 4-thiouridine in position 8 of tRNAs, which functions as a near-UV photosensor. Also catalyzes the transfer of sulfur to the sulfur carrier protein ThiS, forming ThiS-thiocarboxylate. This is a step in the synthesis of thiazole, in the thiamine biosynthesis pathway. The sulfur is donated as persulfide by IscS. The protein is Probable tRNA sulfurtransferase of Listeria monocytogenes serovar 1/2a (strain ATCC BAA-679 / EGD-e).